A 294-amino-acid polypeptide reads, in one-letter code: Non-selective voltage-gated ion channel VDAC2 (294 aa).

N-acetylalanine is present on alanine 2. The ATP site is built by lysine 23 and lysine 31. At lysine 31 the chain carries N6-acetyllysine; alternate. The residue at position 31 (lysine 31) is an N6-succinyllysine; alternate. Lysine 31 is covalently cross-linked (Glycyl lysine isopeptide (Lys-Gly) (interchain with G-Cter in ubiquitin); alternate). 2 beta stranded membrane passes run 37–46 (LVKLDVKTKS) and 50–58 (VEFSTSGSS). Residues lysine 64 and lysine 72 each participate in a glycyl lysine isopeptide (Lys-Gly) (interchain with G-Cter in ubiquitin) cross-link. Residues 65-75 (VTGTLETKYKW) form a beta stranded membrane-spanning segment. Tyrosine 78 carries the post-translational modification Phosphotyrosine. A run of 3 beta stranded transmembrane segments spans residues 80–87 (LTFTEKWN), 91–100 (TLGTEIAIED), and 106–115 (LKLTFDTTFS). Threonine 118 carries the phosphothreonine modification. The residue at position 120 (lysine 120) is an N6-acetyllysine; alternate. Lysine 120 is covalently cross-linked (Glycyl lysine isopeptide (Lys-Gly) (interchain with G-Cter in ubiquitin); alternate). Glycyl lysine isopeptide (Lys-Gly) (interchain with G-Cter in ubiquitin) cross-links involve residues lysine 121 and lysine 124. The next 4 membrane-spanning stretches (beta stranded) occupy residues 122-131 (SGKIKSSYKR), 134-141 (INLGCDVD), 148-156 (AIHGSAVFG), and 161-169 (LAGYQMTFD). Residue lysine 172 forms a Glycyl lysine isopeptide (Lys-Gly) (interchain with G-Cter in ubiquitin) linkage. The next 6 beta stranded transmembrane spans lie at 174–186 (KLTR…GYRT), 189–196 (FQLHTNVN), 200–209 (EFGGSIYQKV), 213–222 (LDTSVNLAWT), 229–238 (RFGIAAKYQL), and 242–249 (ASISAKVN). Serine 251 is modified (phosphoserine). Residues 253–255 (LIG) and 271–275 (SALVD) each bind NAD(+). The next 2 membrane-spanning stretches (beta stranded) occupy residues 253–262 (LIGVGYTQTL) and 265–274 (GVKLTLSALV). Lysine 277 carries the N6-acetyllysine; alternate modification. Lysine 277 is covalently cross-linked (Glycyl lysine isopeptide (Lys-Gly) (interchain with G-Cter in ubiquitin); alternate). The beta stranded transmembrane segment at 284–293 (HKVGLALELE) threads the bilayer. Lysine 285 participates in a covalent cross-link: Glycyl lysine isopeptide (Lys-Gly) (interchain with G-Cter in ubiquitin).

It belongs to the eukaryotic mitochondrial porin family. As to quaternary structure, monomer, homodimer and higher order oligomers; formation of higher order structures is necessary for scramblase activity. Interacts with ARMC12 in a TBC1D21-dependent manner. Interacts with KLC3. Interacts with SPATA33. Interacts with PPP3CC in a SPATA33-dependent manner. Post-translationally, ubiquitinated by PRKN during mitophagy, leading to its degradation and enhancement of mitophagy. Deubiquitinated by USP30. Expressed in erythrocytes (at protein level). Expressed in all tissues examined.

It localises to the mitochondrion outer membrane. Its subcellular location is the membrane. The enzyme catalyses chloride(in) = chloride(out). The catalysed reaction is K(+)(in) = K(+)(out). It carries out the reaction a 1,2-diacyl-sn-glycero-3-phospho-L-serine(in) = a 1,2-diacyl-sn-glycero-3-phospho-L-serine(out). It catalyses the reaction a 1,2-diacyl-sn-glycero-3-phosphocholine(in) = a 1,2-diacyl-sn-glycero-3-phosphocholine(out). The enzyme catalyses a 1,2-diacyl-sn-glycero-3-phospho-(1D-myo-inositol)(in) = a 1,2-diacyl-sn-glycero-3-phospho-(1D-myo-inositol)(out). Its function is as follows. Non-selective voltage-gated ion channel that mediates the transport of anions and cations through the mitochondrion outer membrane and plasma membrane. The channel adopts an open conformation at zero mV and a closed conformation at both positive and negative potentials. There are two populations of channels; the main that functions in a lower open-state conductance with lower ion selectivity, that switch, in a voltage-dependent manner, from the open to a low-conducting 'closed' state and the other that has a normal ion selectivity in the typical high conductance, 'open' state. Binds various lipids, including the sphingolipid ceramide, the phospholipid phosphatidylcholine, and the sterols cholesterol and oxysterol. Binding of ceramide promotes the mitochondrial outer membrane permeabilization (MOMP) apoptotic pathway. In terms of biological role, catalyzes the scrambling of phospholipids across the outer mitochondrial membrane; the mechanism is unrelated to channel activity and is capable of translocating both anionic and zwitterionic phospholipids. The chain is Non-selective voltage-gated ion channel VDAC2 from Homo sapiens (Human).